The sequence spans 360 residues: Ribosomal RNA large subunit methyltransferase F (360 aa).

The segment at 1–36 is disordered; that stretch reads MSKLISKQGKRPALSQSGLAKPSTSKKSSASKNANT. The segment covering 23 to 36 has biased composition (low complexity); it reads STSKKSSASKNANT.

The protein belongs to the methyltransferase superfamily. METTL16/RlmF family.

The protein localises to the cytoplasm. It carries out the reaction adenosine(1618) in 23S rRNA + S-adenosyl-L-methionine = N(6)-methyladenosine(1618) in 23S rRNA + S-adenosyl-L-homocysteine + H(+). Functionally, specifically methylates the adenine in position 1618 of 23S rRNA. In Shewanella denitrificans (strain OS217 / ATCC BAA-1090 / DSM 15013), this protein is Ribosomal RNA large subunit methyltransferase F.